Here is a 203-residue protein sequence, read N- to C-terminus: Large ribosomal subunit protein uL13 (203 aa).

A2 carries the post-translational modification N-acetylalanine. The residue at position 59 (R59) is a Citrulline. Position 77 is a phosphoserine (S77). Residue R140 is modified to Citrulline. K191 bears the N6-acetyllysine mark.

The protein belongs to the universal ribosomal protein uL13 family. Component of the 60S ribosome. Component of the GAIT complex. Interacts with EIF4G1. Post-translationally, phosphorylation at Ser-77 upon interferon-gamma treatment in macrophages involves a DAPK1-DAPK3 kinase cascade and is causing release from the ribosome, association with the GAIT complex and subsequent involvement in transcript-selective translation inhibition. In terms of processing, citrullinated by PADI4.

It is found in the cytoplasm. Its function is as follows. Associated with ribosomes but is not required for canonical ribosome function and has extra-ribosomal functions. Component of the GAIT (gamma interferon-activated inhibitor of translation) complex which mediates interferon-gamma-induced transcript-selective translation inhibition in inflammation processes. Upon interferon-gamma activation and subsequent phosphorylation dissociates from the ribosome and assembles into the GAIT complex which binds to stem loop-containing GAIT elements in the 3'-UTR of diverse inflammatory mRNAs (such as ceruplasmin) and suppresses their translation. In the GAIT complex interacts with m7G cap-bound eIF4G at or near the eIF3-binding site and blocks the recruitment of the 43S ribosomal complex. Involved in methylation of rRNA. The polypeptide is Large ribosomal subunit protein uL13 (RPL13A) (Canis lupus familiaris (Dog)).